A 292-amino-acid polypeptide reads, in one-letter code: N-acetylneuraminate lyase (292 aa).

The aceneuramate site is built by Ser-46 and Thr-47. Tyr-135 serves as the catalytic Proton donor. Residue Lys-163 is the Schiff-base intermediate with substrate of the active site. Aceneuramate contacts are provided by Thr-165, Gly-187, Asp-189, Glu-190, and Ser-206.

The protein belongs to the DapA family. NanA subfamily. In terms of assembly, homotetramer.

Its subcellular location is the cytoplasm. It catalyses the reaction aceneuramate = aldehydo-N-acetyl-D-mannosamine + pyruvate. Its pathway is amino-sugar metabolism; N-acetylneuraminate degradation; D-fructose 6-phosphate from N-acetylneuraminate: step 1/5. In terms of biological role, catalyzes the reversible aldol cleavage of N-acetylneuraminic acid (sialic acid; Neu5Ac) to form pyruvate and N-acetylmannosamine (ManNAc) via a Schiff base intermediate. This chain is N-acetylneuraminate lyase, found in Lactiplantibacillus plantarum (strain ATCC BAA-793 / NCIMB 8826 / WCFS1) (Lactobacillus plantarum).